Consider the following 154-residue polypeptide: Small ribosomal subunit protein uS19 (154 aa).

The protein belongs to the universal ribosomal protein uS19 family.

This is Small ribosomal subunit protein uS19 (RPS15) from Oryza sativa subsp. japonica (Rice).